A 318-amino-acid chain; its full sequence is MRKQSARTAALILCILSYLLVGAAVFDALESEAERSRQRLLARKRGEFRRKYRFSADDYRELERLALQAEPHRAGRQWRFAGSFYFAITVITTIGYGHAAPGTDSGKVFCMFYALLGIPLTLVTFQSLGERLNALVRCLLLAAKRCLGLRRPHVSAENMVVAGLLLCAATLALGAAAFAHFEGWTFFHAYYYCFITLTTIGFGDFVALQRDEALQKKPPYVAFSFLYILLGLTVIGAFLNLVVLRFLASAEAPERAALRRASVFRRGAPESRVRIPYPFHPLETWARDNPAFSPPLSPEAVHDCHSSPDRLRARRKSI.

The Cytoplasmic portion of the chain corresponds to 1–8; that stretch reads MRKQSART. A helical membrane pass occupies residues 9-29; it reads AALILCILSYLLVGAAVFDAL. Residues 80 to 101 constitute an intramembrane region (pore-forming); sequence FAGSFYFAITVITTIGYGHAAP. Residues 108–128 form a helical membrane-spanning segment; that stretch reads VFCMFYALLGIPLTLVTFQSL. Topologically, residues 129 to 158 are cytoplasmic; it reads GERLNALVRCLLLAAKRCLGLRRPHVSAEN. Residues 159 to 179 form a helical membrane-spanning segment; it reads MVVAGLLLCAATLALGAAAFA. Positions 189–209 form an intramembrane region, pore-forming; that stretch reads AYYYCFITLTTIGFGDFVALQ. The chain crosses the membrane as a helical span at residues 223–243; it reads FSFLYILLGLTVIGAFLNLVV. Over 244–318 the chain is Cytoplasmic; the sequence is LRFLASAEAP…DRLRARRKSI (75 aa). Positions 296–318 are disordered; that stretch reads LSPEAVHDCHSSPDRLRARRKSI. The span at 300–311 shows a compositional bias: basic and acidic residues; that stretch reads AVHDCHSSPDRL.

Belongs to the two pore domain potassium channel (TC 1.A.1.8) family. As to quaternary structure, heterodimer. Phosphorylated. Brain-specific. Highly expressed in auditory nuclei, in Purkinje cells and in olfactory bulb mitral cells.

It localises to the membrane. Probable potassium channel subunit. No channel activity observed in heterologous systems. May need to associate with another protein to form a functional channel. The protein is Potassium channel subfamily K member 15 (Kcnk15) of Rattus norvegicus (Rat).